We begin with the raw amino-acid sequence, 39 residues long: Protein MchX (39 aa).

The chain crosses the membrane as a helical span at residues 15–37 (SALSSTLLLSLIMSATLLEYSLS).

The protein localises to the cell inner membrane. Functionally, required for microcin H47 production. Possibly involved in a regulatory loop modulating its own expression and that of MchI and MchB. This chain is Protein MchX (mchX), found in Escherichia coli.